The chain runs to 266 residues: Aspartate/glutamate leucyltransferase (266 aa).

The protein belongs to the R-transferase family. Bpt subfamily.

The protein localises to the cytoplasm. It carries out the reaction N-terminal L-glutamyl-[protein] + L-leucyl-tRNA(Leu) = N-terminal L-leucyl-L-glutamyl-[protein] + tRNA(Leu) + H(+). The enzyme catalyses N-terminal L-aspartyl-[protein] + L-leucyl-tRNA(Leu) = N-terminal L-leucyl-L-aspartyl-[protein] + tRNA(Leu) + H(+). Functions in the N-end rule pathway of protein degradation where it conjugates Leu from its aminoacyl-tRNA to the N-termini of proteins containing an N-terminal aspartate or glutamate. The polypeptide is Aspartate/glutamate leucyltransferase (Rhizorhabdus wittichii (strain DSM 6014 / CCUG 31198 / JCM 15750 / NBRC 105917 / EY 4224 / RW1) (Sphingomonas wittichii)).